Reading from the N-terminus, the 73-residue chain is DNA-directed RNA polymerase subunit omega (73 aa).

The protein belongs to the RNA polymerase subunit omega family. As to quaternary structure, the RNAP catalytic core consists of 2 alpha, 1 beta, 1 beta' and 1 omega subunit. When a sigma factor is associated with the core the holoenzyme is formed, which can initiate transcription.

The catalysed reaction is RNA(n) + a ribonucleoside 5'-triphosphate = RNA(n+1) + diphosphate. Promotes RNA polymerase assembly. Latches the N- and C-terminal regions of the beta' subunit thereby facilitating its interaction with the beta and alpha subunits. In Maridesulfovibrio salexigens (strain ATCC 14822 / DSM 2638 / NCIMB 8403 / VKM B-1763) (Desulfovibrio salexigens), this protein is DNA-directed RNA polymerase subunit omega.